The primary structure comprises 1357 residues: Major yolk protein (1357 aa).

A signal peptide spans 1 to 15; it reads MRAAILFCLVASSMA. Transferrin-like domains follow at residues 132-478 and 493-1101; these read VRWC…GEVY and AKIC…AIVK. N-linked (GlcNAc...) asparagine glycans are attached at residues Asn198, Asn227, Asn304, Asn310, Asn402, Asn499, Asn530, Asn541, Asn572, Asn578, Asn625, Asn639, Asn692, Asn732, Asn741, Asn1035, Asn1043, Asn1081, Asn1128, Asn1208, Asn1241, and Asn1258.

The protein belongs to the transferrin family. In terms of tissue distribution, synthesized in the intestines of the females and males and also in ovaries and testis.

It is found in the secreted. In terms of biological role, may serve the following two functions: a classical role as a yolk protein precursor and probably shuttle iron to developing germ cells. This chain is Major yolk protein, found in Strongylocentrotus purpuratus (Purple sea urchin).